Consider the following 259-residue polypeptide: Synaptophysin-like protein 1 (259 aa).

At 1–33 (MAPNIYLVRQRISRLGQRMSGFQINLNPLKEPL) the chain is on the cytoplasmic side. An MARVEL domain is found at 28-237 (PLKEPLGFIK…NAWFVYKETS (210 aa)). A helical membrane pass occupies residues 34–54 (GFIKVLEWIASIFAFATCGGF). Residues 55–116 (KGQTEIQVNC…LIGDYSSSAQ (62 aa)) lie on the Vesicular side of the membrane. An N-linked (GlcNAc...) asparagine glycan is attached at asparagine 71. A helical transmembrane segment spans residues 117 to 137 (FYVTFAVFVFLYCIAALLLYV). Topologically, residues 138 to 150 (GYTSLYLDSRKLP) are cytoplasmic. A helical membrane pass occupies residues 151 to 171 (MIDFVVTLVATFLWLVSTSAW). Residues 172-212 (AKALTDIKIATGHNIIDELPPCKKKAVLCYFGSVTSMGSLN) are Vesicular-facing. Asparagine 212 carries an N-linked (GlcNAc...) asparagine glycan. A helical membrane pass occupies residues 213-233 (VSVIFGFLNMILWGGNAWFVY). The Cytoplasmic segment spans residues 234–259 (KETSLHSPSNTSAPHSQGGIPPPTGI).

This sequence belongs to the synaptophysin/synaptobrevin family.

It is found in the cytoplasmic vesicle membrane. The protein resides in the melanosome. The protein is Synaptophysin-like protein 1 (SYPL1) of Homo sapiens (Human).